A 156-amino-acid polypeptide reads, in one-letter code: Transcription elongation factor GreA (156 aa).

The protein belongs to the GreA/GreB family.

Necessary for efficient RNA polymerase transcription elongation past template-encoded arresting sites. The arresting sites in DNA have the property of trapping a certain fraction of elongating RNA polymerases that pass through, resulting in locked ternary complexes. Cleavage of the nascent transcript by cleavage factors such as GreA or GreB allows the resumption of elongation from the new 3'terminus. GreA releases sequences of 2 to 3 nucleotides. The sequence is that of Transcription elongation factor GreA from Thermomicrobium roseum (strain ATCC 27502 / DSM 5159 / P-2).